We begin with the raw amino-acid sequence, 217 residues long: Large ribosomal subunit protein uL3 (217 aa).

Polar residues predominate over residues 134–146; the sequence is GRATHGNSRSHNV. The disordered stretch occupies residues 134–154; sequence GRATHGNSRSHNVPGSIGMAQ. Residue glutamine 154 is modified to N5-methylglutamine.

The protein belongs to the universal ribosomal protein uL3 family. As to quaternary structure, part of the 50S ribosomal subunit. Forms a cluster with proteins L14 and L19. In terms of processing, methylated by PrmB.

Functionally, one of the primary rRNA binding proteins, it binds directly near the 3'-end of the 23S rRNA, where it nucleates assembly of the 50S subunit. This is Large ribosomal subunit protein uL3 from Burkholderia lata (strain ATCC 17760 / DSM 23089 / LMG 22485 / NCIMB 9086 / R18194 / 383).